Consider the following 225-residue polypeptide: T4 protein (225 aa).

This sequence belongs to the poxviruses B9 family.

The chain is T4 protein from Rabbit fibroma virus (strain Kasza) (RFV).